A 261-amino-acid polypeptide reads, in one-letter code: Proteasome subunit beta type-2 (261 aa).

A propeptide spans 1-29 (MAGLSFDNYQRNNFLAENSHTQPKATSTG) (removed in mature form). Threonine 30 acts as the Nucleophile in catalysis.

Belongs to the peptidase T1B family. As to quaternary structure, the 26S proteasome consists of a 20S proteasome core and two 19S regulatory subunits. The 20S proteasome core is composed of 28 subunits that are arranged in four stacked rings, resulting in a barrel-shaped structure. The two end rings are each formed by seven alpha subunits, and the two central rings are each formed by seven beta subunits. The catalytic chamber with the active sites is on the inside of the barrel.

It localises to the cytoplasm. The protein resides in the nucleus. It carries out the reaction Cleavage of peptide bonds with very broad specificity.. The proteasome degrades poly-ubiquitinated proteins in the cytoplasm and in the nucleus. It is essential for the regulated turnover of proteins and for the removal of misfolded proteins. The proteasome is a multicatalytic proteinase complex that is characterized by its ability to cleave peptides with Arg, Phe, Tyr, Leu, and Glu adjacent to the leaving group at neutral or slightly basic pH. It has an ATP-dependent proteolytic activity. This is Proteasome subunit beta type-2 (PUP1) from Saccharomyces cerevisiae (strain ATCC 204508 / S288c) (Baker's yeast).